A 252-amino-acid polypeptide reads, in one-letter code: D-aminoacyl-tRNA deacylase (252 aa).

The protein belongs to the DtdA deacylase family. Monomer. Zn(2+) serves as cofactor.

It carries out the reaction a D-aminoacyl-tRNA + H2O = a tRNA + a D-alpha-amino acid + H(+). It catalyses the reaction glycyl-tRNA(Ala) + H2O = tRNA(Ala) + glycine + H(+). Its function is as follows. D-aminoacyl-tRNA deacylase with broad substrate specificity. By recycling D-aminoacyl-tRNA to D-amino acids and free tRNA molecules, this enzyme counteracts the toxicity associated with the formation of D-aminoacyl-tRNA entities in vivo. This Pyrobaculum islandicum (strain DSM 4184 / JCM 9189 / GEO3) protein is D-aminoacyl-tRNA deacylase.